A 520-amino-acid chain; its full sequence is Diacylglycerol O-acyltransferase 1 (520 aa).

2 disordered regions span residues 28 to 57 (RRKS…GAPA) and 72 to 116 (QGTA…AHRR). Over residues 34–54 (DSSNGLLLSGSDNNSPSDDVG) the composition is skewed to low complexity. Residues 81–98 (NNGGGDNNGGGRGGGEGR) show a composition bias toward gly residues. 7 helical membrane passes run 126–146 (AIFK…LIAV), 176–196 (WPLF…FTVE), 207–227 (PVVI…PVYV), 233–253 (SAFL…LKLV), 276–296 (VSYY…TLCY), 317–337 (KLVI…NPIV), and 365–385 (VWLC…AELL). Residues 392–398 (FYKDWWN) carry the FYXDWWN motif motif. A run of 3 helical transmembrane segments spans residues 434–454 (LAII…IAVP), 457–477 (LFKL…FITN), and 487–507 (VGNM…CVLL). Histidine 447 is an active-site residue.

This sequence belongs to the membrane-bound acyltransferase family. Sterol o-acyltransferase subfamily. In terms of assembly, interacts with LPCAT2 and LPAT2. In terms of tissue distribution, ubiquitous. Highest expression in young developing seeds.

It is found in the plastid. The protein resides in the chloroplast membrane. Its subcellular location is the endoplasmic reticulum membrane. The enzyme catalyses an acyl-CoA + a 1,2-diacyl-sn-glycerol = a triacyl-sn-glycerol + CoA. It catalyses the reaction 1,2-di-(9Z-octadecenoyl)-sn-glycerol + (9Z)-octadecenoyl-CoA = 1,2,3-tri-(9Z-octadecenoyl)-glycerol + CoA. Its pathway is glycerolipid metabolism; triacylglycerol biosynthesis. With respect to regulation, partially inhibited by niacin. Functionally, major contributor to triacylglycerol (TAG) synthesis and oil accumulation in seeds. Catalyzes the acylation of the sn-3 hydroxy group of sn-1,2-diacylglycerol using acyl-CoA. Can use palmitoyl-CoA and oleoyl-CoA as substrates. Can use oleoyl-CoA and linoleoyl-CoA as substrates. Has substrate preference for oleoyl-CoA compared to linoleoyl-CoA. Has complementary functions with PDAT1 that are essential for triacylglycerol synthesis and normal development of both seeds and pollen. This Arabidopsis thaliana (Mouse-ear cress) protein is Diacylglycerol O-acyltransferase 1.